The sequence spans 162 residues: Ribonuclease P protein component (162 aa).

The segment at Met1 to Asp67 is disordered. Residues Gly21 to Gly31 are compositionally biased toward basic and acidic residues.

Belongs to the RnpA family. Consists of a catalytic RNA component (M1 or rnpB) and a protein subunit.

It catalyses the reaction Endonucleolytic cleavage of RNA, removing 5'-extranucleotides from tRNA precursor.. Its function is as follows. RNaseP catalyzes the removal of the 5'-leader sequence from pre-tRNA to produce the mature 5'-terminus. It can also cleave other RNA substrates such as 4.5S RNA. The protein component plays an auxiliary but essential role in vivo by binding to the 5'-leader sequence and broadening the substrate specificity of the ribozyme. The protein is Ribonuclease P protein component of Thermus brockianus.